Consider the following 483-residue polypeptide: ATP-dependent RNA helicase dbp-5 (483 aa).

Residues 1–47 form a disordered region; sequence MADLASRITKPDEAPAAAPEAAPVSAPASEEPKAPENETSIEESQSN. Over residues 14 to 29 the composition is skewed to low complexity; that stretch reads APAAAPEAAPVSAPAS. Positions 74–102 match the Q motif motif; the sequence is SSFDELGLPEAVNRGLLAINFKKPSKVQE. Residues 107–276 enclose the Helicase ATP-binding domain; sequence LMLSDPPRNM…ERFAPNANQM (170 aa). 120 to 127 contributes to the ATP binding site; it reads SQSGTGKT. Positions 223–226 match the DEAD box motif; that stretch reads DEAD. Residues 304–455 enclose the Helicase C-terminal domain; sequence ILCKLYGLMT…LIQLNPNDLD (152 aa).

The protein belongs to the DEAD box helicase family. DDX19/DBP5 subfamily. In terms of assembly, associates with the nuclear pore complex.

The protein resides in the cytoplasm. The protein localises to the nucleus. It localises to the nuclear pore complex. It is found in the nucleus membrane. It catalyses the reaction ATP + H2O = ADP + phosphate + H(+). Its function is as follows. ATP-dependent RNA helicase associated with the nuclear pore complex and essential for mRNA export from the nucleus. May participate in a terminal step of mRNA export through the removal of proteins that accompany mRNA through the nucleopore complex. May also be involved in early transcription. In Neurospora crassa (strain ATCC 24698 / 74-OR23-1A / CBS 708.71 / DSM 1257 / FGSC 987), this protein is ATP-dependent RNA helicase dbp-5 (dbp-5).